A 310-amino-acid chain; its full sequence is Aspartate carbamoyltransferase catalytic subunit (310 aa).

Positions 58 and 59 each coordinate carbamoyl phosphate. An L-aspartate-binding site is contributed by Lys86. 3 residues coordinate carbamoyl phosphate: Arg108, His136, and Gln139. Residues Arg169 and Arg224 each coordinate L-aspartate. Positions 265 and 266 each coordinate carbamoyl phosphate.

It belongs to the aspartate/ornithine carbamoyltransferase superfamily. ATCase family. In terms of assembly, heterododecamer (2C3:3R2) of six catalytic PyrB chains organized as two trimers (C3), and six regulatory PyrI chains organized as three dimers (R2).

The catalysed reaction is carbamoyl phosphate + L-aspartate = N-carbamoyl-L-aspartate + phosphate + H(+). It participates in pyrimidine metabolism; UMP biosynthesis via de novo pathway; (S)-dihydroorotate from bicarbonate: step 2/3. Its function is as follows. Catalyzes the condensation of carbamoyl phosphate and aspartate to form carbamoyl aspartate and inorganic phosphate, the committed step in the de novo pyrimidine nucleotide biosynthesis pathway. This is Aspartate carbamoyltransferase catalytic subunit from Geobacter sp. (strain M21).